The primary structure comprises 533 residues: Beta-glucosidase 10 (533 aa).

Residues M1–A23 form the signal peptide. Residue Q53 coordinates a beta-D-glucoside. N122 is a glycosylation site (N-linked (GlcNAc...) asparagine). A beta-D-glucoside-binding positions include H157 and N202–E203. E203 acts as the Proton donor in catalysis. An intrachain disulfide couples C222 to C230. A beta-D-glucoside is bound at residue Y369. N-linked (GlcNAc...) asparagine glycosylation is present at N384. An a beta-D-glucoside-binding site is contributed by E440. Residue E440 is the Nucleophile of the active site. A glycan (N-linked (GlcNAc...) asparagine) is linked at N448. Residues W489, E496–W497, and F505 each bind a beta-D-glucoside.

It belongs to the glycosyl hydrolase 1 family.

The catalysed reaction is Hydrolysis of terminal, non-reducing beta-D-glucosyl residues with release of beta-D-glucose.. In Oryza sativa subsp. japonica (Rice), this protein is Beta-glucosidase 10 (BGLU10).